The following is a 120-amino-acid chain: U-scoloptoxin(20)-Cw1a (120 aa).

Residues 1-26 (MNSTDRLLGVLLAVVALILLIRISEA) form the signal peptide. The tract at residues 87–106 (SSGKSLTTTKDSSESRKKEI) is disordered. Over residues 97–106 (DSSESRKKEI) the composition is skewed to basic and acidic residues.

Belongs to the scoloptoxin-20 family. Post-translationally, contains 3 disulfide bonds. In terms of tissue distribution, expressed by the venom gland.

The protein localises to the secreted. This chain is U-scoloptoxin(20)-Cw1a, found in Cormocephalus westwoodi (Westwood's green centipede).